The primary structure comprises 510 residues: ATP synthase subunit alpha 1 (510 aa).

ATP is bound at residue 167 to 174 (GDRATGKT).

Belongs to the ATPase alpha/beta chains family. F-type ATPases have 2 components, CF(1) - the catalytic core - and CF(0) - the membrane proton channel. CF(1) has five subunits: alpha(3), beta(3), gamma(1), delta(1), epsilon(1). CF(0) has three main subunits: a(1), b(2) and c(9-12). The alpha and beta chains form an alternating ring which encloses part of the gamma chain. CF(1) is attached to CF(0) by a central stalk formed by the gamma and epsilon chains, while a peripheral stalk is formed by the delta and b chains.

It is found in the cell inner membrane. The catalysed reaction is ATP + H2O + 4 H(+)(in) = ADP + phosphate + 5 H(+)(out). Produces ATP from ADP in the presence of a proton gradient across the membrane. The alpha chain is a regulatory subunit. The protein is ATP synthase subunit alpha 1 of Paraburkholderia xenovorans (strain LB400).